We begin with the raw amino-acid sequence, 465 residues long: Methionine aminopeptidase 2-1 (465 aa).

The segment at 1 to 100 (MGSKTAENES…QSSPPRIPLA (100 aa)) is disordered. Positions 31–40 (RGAHWSRDGD) are enriched in basic and acidic residues. The span at 75–87 (SKKRKKRPKKKTS) shows a compositional bias: basic residues. His-216 provides a ligand contact to substrate. 3 residues coordinate a divalent metal cation: Asp-237, Asp-248, and His-317. A substrate-binding site is contributed by His-325. A divalent metal cation is bound by residues Glu-350 and Glu-446.

This sequence belongs to the peptidase M24A family. Methionine aminopeptidase eukaryotic type 2 subfamily. It depends on Co(2+) as a cofactor. Zn(2+) serves as cofactor. Mn(2+) is required as a cofactor. The cofactor is Fe(2+).

The protein localises to the cytoplasm. It carries out the reaction Release of N-terminal amino acids, preferentially methionine, from peptides and arylamides.. In terms of biological role, cotranslationally removes the N-terminal methionine from nascent proteins. The N-terminal methionine is often cleaved when the second residue in the primary sequence is small and uncharged (Met-Ala-, Cys, Gly, Pro, Ser, Thr, or Val). The protein is Methionine aminopeptidase 2-1 of Penicillium rubens (strain ATCC 28089 / DSM 1075 / NRRL 1951 / Wisconsin 54-1255) (Penicillium chrysogenum).